The following is a 444-amino-acid chain: Phosphoglucosamine mutase (444 aa).

The Phosphoserine intermediate role is filled by S102. The Mg(2+) site is built by S102, D241, D243, and D245. The residue at position 102 (S102) is a Phosphoserine.

Belongs to the phosphohexose mutase family. The cofactor is Mg(2+). Activated by phosphorylation.

It carries out the reaction alpha-D-glucosamine 1-phosphate = D-glucosamine 6-phosphate. Functionally, catalyzes the conversion of glucosamine-6-phosphate to glucosamine-1-phosphate. The sequence is that of Phosphoglucosamine mutase from Histophilus somni (strain 2336) (Haemophilus somnus).